Here is a 262-residue protein sequence, read N- to C-terminus: Acetaldehyde dehydrogenase 7 (262 aa).

10 to 13 (SGNI) contributes to the NAD(+) binding site. Cys-128 serves as the catalytic Acyl-thioester intermediate. 159-167 (SAGPGTRAN) is an NAD(+) binding site.

The protein belongs to the acetaldehyde dehydrogenase family.

The enzyme catalyses acetaldehyde + NAD(+) + CoA = acetyl-CoA + NADH + H(+). In Rhodococcus jostii (strain RHA1), this protein is Acetaldehyde dehydrogenase 7.